A 101-amino-acid chain; its full sequence is SLIAERQRVMAAQVALRRQQAQEEELGISHPIPLPSATELFVKKENSGGSSCLLLESSSPTHSTSTVTTVSTSPSEGRMLIQDVPSITSRGHLESTSDLVV.

Positions 1 to 13 (SLIAERQRVMAAQ) form a DNA-binding region, DM. Residues 52-75 (CLLLESSSPTHSTSTVTTVSTSPS) are compositionally biased toward low complexity. The interval 52–79 (CLLLESSSPTHSTSTVTTVSTSPSEGRM) is disordered.

The protein belongs to the DMRT family.

It localises to the nucleus. In terms of biological role, may be required for testis development. The polypeptide is Doublesex- and mab-3-related transcription factor 1 (DMRT1) (Alligator mississippiensis (American alligator)).